Here is a 212-residue protein sequence, read N- to C-terminus: Protein Rv0786c (212 aa).

The sequence is that of Protein Rv0786c from Mycobacterium tuberculosis (strain ATCC 25618 / H37Rv).